Here is a 181-residue protein sequence, read N- to C-terminus: ADP-ribosylation factor 1 (181 aa).

Residue G2 is the site of N-myristoyl glycine attachment. GTP-binding positions include 24-31 (GLDAAGKT), 67-71 (DVGGQ), and 126-129 (NKQD).

Belongs to the small GTPase superfamily. Arf family. As to quaternary structure, interacts with AGD7 and GDAP1. GDP-locked form interacts with cytosolic tail of p24 proteins. Interacts with AGD5 at trans-Golgi network. Interacts with A.tumefaciens AK6b.

It localises to the golgi apparatus. It is found in the endosome. Its subcellular location is the trans-Golgi network. The protein localises to the early endosome. The enzyme catalyses GTP + H2O = GDP + phosphate + H(+). Activated by AGD7 and AGD10. In terms of biological role, GTP-binding protein involved in protein trafficking; required for the sequence-specific vacuolar sorting route to the lytic vacuole, for the ER-to-Golgi transport and for the Golgi-derived transport to the plasma membrane. Involved in the recruitment of COPI and GDAP1 to membranes. Required for recycling of PIN auxin transporters (e.g. PIN1 and PIN2) in a fungal toxin brefeldin A (BFA)-dependent manner. Involved in various auxin-dependent developmental processes. The protein is ADP-ribosylation factor 1 of Arabidopsis thaliana (Mouse-ear cress).